Reading from the N-terminus, the 880-residue chain is Alanine--tRNA ligase (880 aa).

Residues His-567, His-571, Cys-669, and His-673 each contribute to the Zn(2+) site.

It belongs to the class-II aminoacyl-tRNA synthetase family. Zn(2+) serves as cofactor.

Its subcellular location is the cytoplasm. The enzyme catalyses tRNA(Ala) + L-alanine + ATP = L-alanyl-tRNA(Ala) + AMP + diphosphate. In terms of biological role, catalyzes the attachment of alanine to tRNA(Ala) in a two-step reaction: alanine is first activated by ATP to form Ala-AMP and then transferred to the acceptor end of tRNA(Ala). Also edits incorrectly charged Ser-tRNA(Ala) and Gly-tRNA(Ala) via its editing domain. The protein is Alanine--tRNA ligase of Bacillus cereus (strain ATCC 14579 / DSM 31 / CCUG 7414 / JCM 2152 / NBRC 15305 / NCIMB 9373 / NCTC 2599 / NRRL B-3711).